We begin with the raw amino-acid sequence, 67 residues long: Protein AaeX (67 aa).

2 helical membrane-spanning segments follow: residues 3–23 and 39–59; these read LLPV…ELLI and GIYE…CCLF.

It belongs to the AaeX family.

Its subcellular location is the cell membrane. The protein is Protein AaeX of Yersinia pseudotuberculosis serotype O:1b (strain IP 31758).